Reading from the N-terminus, the 161-residue chain is Nucleotide-binding protein Ssed_3443 (161 aa).

The protein belongs to the YajQ family.

In terms of biological role, nucleotide-binding protein. This Shewanella sediminis (strain HAW-EB3) protein is Nucleotide-binding protein Ssed_3443.